The chain runs to 252 residues: 5-oxoprolinase subunit A (252 aa).

Belongs to the LamB/PxpA family. In terms of assembly, forms a complex composed of PxpA, PxpB and PxpC.

The catalysed reaction is 5-oxo-L-proline + ATP + 2 H2O = L-glutamate + ADP + phosphate + H(+). Its function is as follows. Catalyzes the cleavage of 5-oxoproline to form L-glutamate coupled to the hydrolysis of ATP to ADP and inorganic phosphate. The protein is 5-oxoprolinase subunit A of Staphylococcus epidermidis (strain ATCC 35984 / DSM 28319 / BCRC 17069 / CCUG 31568 / BM 3577 / RP62A).